The primary structure comprises 443 residues: FAD-dependent monooxygenase orf3 (443 aa).

The chain crosses the membrane as a helical span at residues 5-25 (SIEVAIIGAGITGITLALGLL). 2 residues coordinate FAD: Glu-35 and Gly-48. N-linked (GlcNAc...) asparagine glycosylation is found at Asn-75 and Asn-87. Residue Arg-116 participates in FAD binding. Arg-199 is an active-site residue. Residues Asp-315 and Ala-328 each contribute to the FAD site.

The protein belongs to the paxM FAD-dependent monooxygenase family. Requires FAD as cofactor.

Its subcellular location is the membrane. Its pathway is secondary metabolite biosynthesis. Its function is as follows. FAD-dependent monooxygenase; part of the gene cluster that mediates the biosynthesis of nigerpyrone and its derivatives carbonarone A and pestalamide A. The biosynthesis pathway begins with the polyketide assembly by epaA to form phenylacetyl triketide precursor from successive condensation of two malonyl-CoA, presumably with one phenylacetyl-CoA starter unit produced by the phenylacetyl-CoA ligase epaB. For the nigerpyrone biosynthesis, the reactive polyketide chain is released as an aldehyde through the R-domain. A nonenzymatic cyclization and dehydration may create nigerpyrone. For the biosynthesis of carbonarone A and pestalamide A, an extra methyl group is added through the C-methyltransferase domain. Several further steps involving the dehydrogenase orf1, the cytochrome P450 monooxygenase orf2 and the FAD-dependent monooxygenase orf3 are required to form a carbonarone A precursor which is converted to carbonarone A via cyclization. The O-acetyltransferase epaC could catalyze the transfer of 2-methylsuccinyl-CoA, a common intermediate in the ethylmalonyl-CoA pathway, to generate the final product pestalamide A. The sequence is that of FAD-dependent monooxygenase orf3 from Aspergillus niger (strain ATCC MYA-4892 / CBS 513.88 / FGSC A1513).